The sequence spans 680 residues: 1-deoxy-D-xylulose-5-phosphate synthase (680 aa).

Thiamine diphosphate contacts are provided by residues H113 and 154-156; that span reads GHS. Position 185 (D185) interacts with Mg(2+). Residues 186-187, N214, F323, and E408 contribute to the thiamine diphosphate site; that span reads GA. Residue N214 participates in Mg(2+) binding.

This sequence belongs to the transketolase family. DXPS subfamily. In terms of assembly, homodimer. Mg(2+) is required as a cofactor. Requires thiamine diphosphate as cofactor.

The catalysed reaction is D-glyceraldehyde 3-phosphate + pyruvate + H(+) = 1-deoxy-D-xylulose 5-phosphate + CO2. It functions in the pathway metabolic intermediate biosynthesis; 1-deoxy-D-xylulose 5-phosphate biosynthesis; 1-deoxy-D-xylulose 5-phosphate from D-glyceraldehyde 3-phosphate and pyruvate: step 1/1. Its function is as follows. Catalyzes the acyloin condensation reaction between C atoms 2 and 3 of pyruvate and glyceraldehyde 3-phosphate to yield 1-deoxy-D-xylulose-5-phosphate (DXP). The polypeptide is 1-deoxy-D-xylulose-5-phosphate synthase (Psychrobacter arcticus (strain DSM 17307 / VKM B-2377 / 273-4)).